A 732-amino-acid polypeptide reads, in one-letter code: MDTSGHFHDSGVGDLDEDPKCPCPSSGDEQQQQQQPPPPSAPPAVPQQPPGPLLQPQPPQLQQQQQQQQQQQQQQQQQQQAPLHPLPQLAQLQSQLVHPGLLHSSPTAFRAPNSANSTAILHPSSRQGSQLNLNDHLLGHSPSSTATSGPGGGSRHRQASPLVHRRDSNPFTEIAMSSCKYSGGVMKPLSRLSASRRNLIEAEPEGQPLQLFSPSNPPEIIISSREDNHAHQTLLHHPNATHNHQHAGTTAGSTTFPKANKRKNQNIGYKLGHRRALFEKRKRLSDYALIFGMFGIVVMVIETELSWGLYSKDSMFSLALKCLISLSTIILLGLIIAYHTREVQLFVIDNGADDWRIAMTYERILYISLEMLVCAIHPIPGEYKFFWTARLAFSYTPSRAEADVDIILSIPMFLRLYLIARVMLLHSKLFTDASSRSIGALNKINFNTRFVMKTLMTICPGTVLLVFSISLWIIAAWTVRVCERYHDQQDVTSNFLGAMWLISITFLSIGYGDMVPHTYCGKGVCLLTGIMGAGCTALVVAVVARKLELTKAEKHVHNFMMDTQLTKRIKNAAANVLRETWLIYKHTKLLKKIDHAKVRKHQRKFLQAIHQLRGVKMEQRKLSDQANTLVDLSKMQNVMYDLITELNDRSEDLEKQIGSLESKLEHLTASFNSLPLLIADTLRQQQQQLLTAFVEARGISVAVGTSHAPPSDSPIGISSTSFPTPYTSSSSC.

Residues 1–11 (MDTSGHFHDSG) are compositionally biased toward basic and acidic residues. Disordered stretches follow at residues 1–82 (MDTS…QQAP) and 103–162 (HSSP…ASPL). The span at 35–59 (QPPPPSAPPAVPQQPPGPLLQPQPP) shows a compositional bias: pro residues. The span at 60-82 (QLQQQQQQQQQQQQQQQQQQQAP) shows a compositional bias: low complexity. Polar residues predominate over residues 113 to 133 (NSANSTAILHPSSRQGSQLNL). The span at 139 to 148 (GHSPSSTATS) shows a compositional bias: low complexity. At S168 the chain carries Phosphoserine. The segment covering 241-257 (THNHQHAGTTAGSTTFP) has biased composition (polar residues). Residues 241-260 (THNHQHAGTTAGSTTFPKAN) are disordered. The chain crosses the membrane as a helical span at residues 289-309 (LIFGMFGIVVMVIETELSWGL). The chain crosses the membrane as a helical span at residues 316–336 (FSLALKCLISLSTIILLGLII). The helical transmembrane segment at 367–387 (ISLEMLVCAIHPIPGEYKFFW) threads the bilayer. Residues 406-426 (IILSIPMFLRLYLIARVMLLH) form a helical membrane-spanning segment. A helical transmembrane segment spans residues 455-475 (LMTICPGTVLLVFSISLWIIA). An intramembrane region (pore-forming) is located at residues 495 to 515 (FLGAMWLISITFLSIGYGDMV). The chain crosses the membrane as a helical span at residues 524 to 544 (VCLLTGIMGAGCTALVVAVVA). The segment at 562–638 (DTQLTKRIKN…LVDLSKMQNV (77 aa)) is calmodulin-binding. Positions 643-670 (ITELNDRSEDLEKQIGSLESKLEHLTAS) form a coiled coil. Residues 704–732 (GTSHAPPSDSPIGISSTSFPTPYTSSSSC) are disordered. The span at 718-732 (SSTSFPTPYTSSSSC) shows a compositional bias: low complexity.

The protein belongs to the potassium channel KCNN family. KCa2.3/KCNN3 subfamily. In terms of assembly, homodimer. Heteromultimer with KCNN2 or KCNN1; this modulates plasma membrane expression and consequently the small conductance calcium-activated potassium channel activity. The complex is composed of 4 channel subunits each of which binds to a calmodulin subunit which regulates the channel activity through calcium-binding. Interacts with CALM1.

Its subcellular location is the cell membrane. The protein resides in the cytoplasm. It localises to the myofibril. The protein localises to the sarcomere. It is found in the z line. The enzyme catalyses K(+)(in) = K(+)(out). Its activity is regulated as follows. Inhibited by bee venom neurotoxin apamin. Functionally, small conductance calcium-activated potassium channel that mediates the voltage-independent transmembrane transfer of potassium across the cell membrane through a constitutive interaction with calmodulin which binds the intracellular calcium allowing its opening. The current is characterized by a voltage-independent activation, an intracellular calcium concentration increase-dependent activation and a single-channel conductance of 10 picosiemens. Also presents an inwardly rectifying current, thus reducing its already small outward conductance of potassium ions, which is particularly the case when the membrane potential displays positive values, above + 20 mV. Activation is followed by membrane hyperpolarization. Thought to regulate neuronal excitability by contributing to the slow component of synaptic afterhyperpolarization. The sequence is that of Small conductance calcium-activated potassium channel protein 3 from Rattus norvegicus (Rat).